Consider the following 119-residue polypeptide: E3 ubiquitin-protein ligase PPP1R11 (119 aa).

Residues 1-42 (MAESSGPTAGGGATSSTVTTESDTQPEHRSLTLKLRKRKPDK) are disordered. Atypical RING finger domain stretches follow at residues 55-65 (NLGRRSSKCCC) and 87-96 (CESAHCIRGH). A disordered region spans residues 96-119 (HKKATSGSKETPSSHHDKTGSMQH). A compositionally biased stretch (basic and acidic residues) spans 107 to 119 (PSSHHDKTGSMQH).

The catalysed reaction is S-ubiquitinyl-[E2 ubiquitin-conjugating enzyme]-L-cysteine + [acceptor protein]-L-lysine = [E2 ubiquitin-conjugating enzyme]-L-cysteine + N(6)-ubiquitinyl-[acceptor protein]-L-lysine.. It functions in the pathway protein modification; protein ubiquitination. Functionally, atypical E3 ubiquitin-protein ligase which ubiquitinates TLR2 at 'Lys-754' leading to its degradation by the proteasome. Inhibitor of protein phosphatase 1. In Xenopus tropicalis (Western clawed frog), this protein is E3 ubiquitin-protein ligase PPP1R11 (ppp1r11).